Here is a 177-residue protein sequence, read N- to C-terminus: Peptide deformylase 2 (177 aa).

Fe cation is bound by residues Cys99 and His141. Residue Glu142 is part of the active site. His145 provides a ligand contact to Fe cation.

This sequence belongs to the polypeptide deformylase family. Requires Fe(2+) as cofactor.

It carries out the reaction N-terminal N-formyl-L-methionyl-[peptide] + H2O = N-terminal L-methionyl-[peptide] + formate. Functionally, removes the formyl group from the N-terminal Met of newly synthesized proteins. Requires at least a dipeptide for an efficient rate of reaction. N-terminal L-methionine is a prerequisite for activity but the enzyme has broad specificity at other positions. This is Peptide deformylase 2 from Ralstonia nicotianae (strain ATCC BAA-1114 / GMI1000) (Ralstonia solanacearum).